Here is a 203-residue protein sequence, read N- to C-terminus: Small ribosomal subunit protein uS4 (203 aa).

Residues 93–153 (QRLDSVVYRL…EKSKNILPIQ (61 aa)) form the S4 RNA-binding domain.

The protein belongs to the universal ribosomal protein uS4 family. Part of the 30S ribosomal subunit. Contacts protein S5. The interaction surface between S4 and S5 is involved in control of translational fidelity.

Its function is as follows. One of the primary rRNA binding proteins, it binds directly to 16S rRNA where it nucleates assembly of the body of the 30S subunit. In terms of biological role, with S5 and S12 plays an important role in translational accuracy. This chain is Small ribosomal subunit protein uS4, found in Leuconostoc mesenteroides subsp. mesenteroides (strain ATCC 8293 / DSM 20343 / BCRC 11652 / CCM 1803 / JCM 6124 / NCDO 523 / NBRC 100496 / NCIMB 8023 / NCTC 12954 / NRRL B-1118 / 37Y).